A 409-amino-acid chain; its full sequence is Evolutionarily conserved signaling intermediate in Toll pathway, mitochondrial (409 aa).

The transit peptide at 1 to 26 directs the protein to the mitochondrion; the sequence is MLRRAQCLLRLHGNGGHSLVSRFRNY. Disordered stretches follow at residues 27–53 and 383–409; these read ATDEGNPKQNPNPNPRAQKPGTKNLPA and EEIEGGASVPATSDNSSQDEHISSRQK. The span at 400 to 409 shows a compositional bias: basic and acidic residues; sequence QDEHISSRQK.

Belongs to the ECSIT family. In terms of assembly, interacts with Traf6. Associates with mitochondrial complex I assembly intermediates during its biogenesis.

Its subcellular location is the cytoplasm. The protein localises to the nucleus. It is found in the mitochondrion. As part of the MCIA complex, involved in the assembly of the mitochondrial complex I. Involved in the innate immune response; promotes the production of antibacterial peptides. In Drosophila melanogaster (Fruit fly), this protein is Evolutionarily conserved signaling intermediate in Toll pathway, mitochondrial.